Here is a 291-residue protein sequence, read N- to C-terminus: Probable aquaporin PIP2-4 (291 aa).

Met-1 carries the post-translational modification N-acetylmethionine. A disordered region spans residues 1-22 (MAKDLDVNESGPPAARDYKDPP). N-acetylalanine; in Probable aquaporin PIP2-4, N-terminally processed is present on Ala-2. The Cytoplasmic portion of the chain corresponds to 2 to 39 (AKDLDVNESGPPAARDYKDPPPAPFFDMEELRKWPLYR). Lys-3 is subject to N6,N6-dimethyllysine. Residues 40–60 (AVIAEFVATLLFLYVSILTVI) form a helical membrane-spanning segment. The Extracellular segment spans residues 61 to 74 (GYKAQTDATAGGVD). Residues 75–95 (CGGVGILGIAWAFGGMIFVLV) form a helical membrane-spanning segment. Over 96–125 (YCTAGISGGHINPAVTVGLFLARKVSLVRT) the chain is Cytoplasmic. The NPA 1 motif lies at 107-109 (NPA). The helical transmembrane segment at 126–146 (VLYIVAQCLGAICGCGFVKAF) threads the bilayer. Over 147–167 (QSSYYTRYGGGANELADGYNK) the chain is Extracellular. Residues 168 to 188 (GTGLGAEIIGTFVLVYTVFSA) form a helical membrane-spanning segment. The Cytoplasmic portion of the chain corresponds to 189-201 (TDPKRNARDSHVP). A helical transmembrane segment spans residues 202–222 (VLAPLPIGFAVFMVHLATIPI). Residues 223–249 (TGTGINPARSFGAAVIYNNEKAWDDQW) lie on the Extracellular side of the membrane. The short motif at 228-230 (NPA) is the NPA 2 element. A helical membrane pass occupies residues 250 to 270 (IFWVGPMIGAAAAAFYHQFIL). At 271 to 291 (RAAAIKALGSFGSFGSFRSFA) the chain is on the cytoplasmic side. Residues Ser-283, Ser-286, and Ser-289 each carry the phosphoserine modification.

It belongs to the MIP/aquaporin (TC 1.A.8) family. PIP (TC 1.A.8.11) subfamily. Expressed in roots.

It is found in the cell membrane. Functionally, aquaporins facilitate the transport of water and small neutral solutes across cell membranes. The chain is Probable aquaporin PIP2-4 (PIP2-4) from Arabidopsis thaliana (Mouse-ear cress).